A 762-amino-acid polypeptide reads, in one-letter code: N,N-dimethylformamidase beta subunit (762 aa).

In terms of assembly, heterotetramer of two DmfA1 (alpha) and two DmfA2 (beta) subunits.

It carries out the reaction N,N-dimethylformamide + H2O = dimethylamine + formate. Its activity is regulated as follows. Activity is slightly inhibited by Mg(2+) and Mn(2+), and slightly increased by Cu(2+). Activity is slightly inhibited by the chelating agents 8-hydroxyquinoline, ethylenediaminetetraacetate, o-phenanthroline and 2,2'-bipyridyl. In terms of biological role, hydrolyzes N,N-dimethylformamide, and to a lesser extent N,N-dimethylacetamide and N,N-diethylacetamide. Has no activity against the substituted amides N-methylformamide, N-ethylformamide, N-ethylformamide and N-methylacetamide or the unsubstituted amides formamide, nicotinamide, acetoamide, benzamide, acetamide and acrylamide. In Alcaligenes sp, this protein is N,N-dimethylformamidase beta subunit.